The sequence spans 510 residues: 2,3-bisphosphoglycerate-independent phosphoglycerate mutase (510 aa).

Mn(2+) is bound by residues Asp-13 and Ser-63. Residue Ser-63 is the Phosphoserine intermediate of the active site. Substrate contacts are provided by residues His-124, 154–155 (RD), Arg-186, Arg-192, 262–265 (RADR), and Lys-334. Mn(2+) is bound by residues Asp-401, His-405, Asp-442, His-443, and His-461.

The protein belongs to the BPG-independent phosphoglycerate mutase family. As to quaternary structure, monomer. Mn(2+) is required as a cofactor.

The catalysed reaction is (2R)-2-phosphoglycerate = (2R)-3-phosphoglycerate. It functions in the pathway carbohydrate degradation; glycolysis; pyruvate from D-glyceraldehyde 3-phosphate: step 3/5. Its function is as follows. Catalyzes the interconversion of 2-phosphoglycerate and 3-phosphoglycerate. In Aliivibrio fischeri (strain ATCC 700601 / ES114) (Vibrio fischeri), this protein is 2,3-bisphosphoglycerate-independent phosphoglycerate mutase.